The chain runs to 270 residues: UPF0162 protein PA3419 (270 aa).

It belongs to the UPF0162 family.

The polypeptide is UPF0162 protein PA3419 (Pseudomonas aeruginosa (strain ATCC 15692 / DSM 22644 / CIP 104116 / JCM 14847 / LMG 12228 / 1C / PRS 101 / PAO1)).